The sequence spans 414 residues: L-cysteine:1D-myo-inositol 2-amino-2-deoxy-alpha-D-glucopyranoside ligase (414 aa).

Cysteine 44 lines the Zn(2+) pocket. L-cysteinyl-5'-AMP-binding positions include 44-47 (CGIT), threonine 59, and 82-84 (NIT). Residues 46 to 56 (ITPYDSTHLGH) carry the 'HIGH' region motif. The 'ERGGDP' region signature appears at 188–193 (ERGGDP). L-cysteinyl-5'-AMP is bound at residue tryptophan 228. Cysteine 232 contacts Zn(2+). 250–252 (GSD) is a binding site for L-cysteinyl-5'-AMP. Zn(2+) is bound at residue histidine 257. Isoleucine 284 serves as a coordination point for L-cysteinyl-5'-AMP. Positions 290–294 (KMSKS) match the 'KMSKS' region motif.

Belongs to the class-I aminoacyl-tRNA synthetase family. MshC subfamily. In terms of assembly, monomer. The cofactor is Zn(2+).

It catalyses the reaction 1D-myo-inositol 2-amino-2-deoxy-alpha-D-glucopyranoside + L-cysteine + ATP = 1D-myo-inositol 2-(L-cysteinylamino)-2-deoxy-alpha-D-glucopyranoside + AMP + diphosphate + H(+). Its function is as follows. Catalyzes the ATP-dependent condensation of GlcN-Ins and L-cysteine to form L-Cys-GlcN-Ins. In Corynebacterium aurimucosum (strain ATCC 700975 / DSM 44827 / CIP 107346 / CN-1) (Corynebacterium nigricans), this protein is L-cysteine:1D-myo-inositol 2-amino-2-deoxy-alpha-D-glucopyranoside ligase.